A 250-amino-acid polypeptide reads, in one-letter code: 3-deoxy-manno-octulosonate cytidylyltransferase (250 aa).

Belongs to the KdsB family.

It is found in the cytoplasm. It catalyses the reaction 3-deoxy-alpha-D-manno-oct-2-ulosonate + CTP = CMP-3-deoxy-beta-D-manno-octulosonate + diphosphate. It participates in nucleotide-sugar biosynthesis; CMP-3-deoxy-D-manno-octulosonate biosynthesis; CMP-3-deoxy-D-manno-octulosonate from 3-deoxy-D-manno-octulosonate and CTP: step 1/1. Its pathway is bacterial outer membrane biogenesis; lipopolysaccharide biosynthesis. Its function is as follows. Activates KDO (a required 8-carbon sugar) for incorporation into bacterial lipopolysaccharide in Gram-negative bacteria. This Legionella pneumophila (strain Corby) protein is 3-deoxy-manno-octulosonate cytidylyltransferase.